We begin with the raw amino-acid sequence, 495 residues long: D-hydantoinase/dihydropyrimidinase (495 aa).

Positions 59, 61, and 150 each coordinate Zn(2+). Residue Lys-150 is modified to N6-carboxylysine. Residue Tyr-155 participates in substrate binding. Positions 183 and 239 each coordinate Zn(2+). A substrate-binding site is contributed by Ser-289. A Zn(2+)-binding site is contributed by Asp-316. Residue Asn-337 coordinates substrate.

The protein belongs to the metallo-dependent hydrolases superfamily. Hydantoinase/dihydropyrimidinase family. Homotetramer. It depends on Zn(2+) as a cofactor. Post-translationally, carboxylation allows a single lysine to coordinate two zinc ions.

It carries out the reaction 5,6-dihydrouracil + H2O = 3-(carbamoylamino)propanoate + H(+). Catalyzes the hydrolysis of dihydropyrimidines and of the structurally related DL-5-mono-substituted hydantoins, to produce N-carbamoyl-D-amino acids. The protein is D-hydantoinase/dihydropyrimidinase of Pseudomonas putida (Arthrobacter siderocapsulatus).